Consider the following 125-residue polypeptide: Ribosome-binding factor A (125 aa).

This sequence belongs to the RbfA family. As to quaternary structure, monomer. Binds 30S ribosomal subunits, but not 50S ribosomal subunits or 70S ribosomes.

It is found in the cytoplasm. One of several proteins that assist in the late maturation steps of the functional core of the 30S ribosomal subunit. Associates with free 30S ribosomal subunits (but not with 30S subunits that are part of 70S ribosomes or polysomes). Required for efficient processing of 16S rRNA. May interact with the 5'-terminal helix region of 16S rRNA. This Fervidobacterium nodosum (strain ATCC 35602 / DSM 5306 / Rt17-B1) protein is Ribosome-binding factor A.